The following is a 389-amino-acid chain: Chorismate synthase (389 aa).

The NADP(+) site is built by Arg40 and Arg46. Residues 131–133 (RSS), 252–253 (NA), Gly297, 312–316 (KPIPT), and Arg338 each bind FMN.

Belongs to the chorismate synthase family. Homotetramer. FMNH2 serves as cofactor.

It catalyses the reaction 5-O-(1-carboxyvinyl)-3-phosphoshikimate = chorismate + phosphate. It participates in metabolic intermediate biosynthesis; chorismate biosynthesis; chorismate from D-erythrose 4-phosphate and phosphoenolpyruvate: step 7/7. Catalyzes the anti-1,4-elimination of the C-3 phosphate and the C-6 proR hydrogen from 5-enolpyruvylshikimate-3-phosphate (EPSP) to yield chorismate, which is the branch point compound that serves as the starting substrate for the three terminal pathways of aromatic amino acid biosynthesis. This reaction introduces a second double bond into the aromatic ring system. This chain is Chorismate synthase, found in Lactiplantibacillus plantarum (strain ATCC BAA-793 / NCIMB 8826 / WCFS1) (Lactobacillus plantarum).